The sequence spans 285 residues: Nucleotide-binding protein GSU1884 (285 aa).

8 to 15 (GLSGSGKS) is a binding site for ATP. 59 to 62 (DIRG) contributes to the GTP binding site.

It belongs to the RapZ-like family.

Functionally, displays ATPase and GTPase activities. The sequence is that of Nucleotide-binding protein GSU1884 from Geobacter sulfurreducens (strain ATCC 51573 / DSM 12127 / PCA).